The sequence spans 341 residues: tRNA N6-adenosine threonylcarbamoyltransferase (341 aa).

The Fe cation site is built by His-115 and His-119. Residues 137 to 141 (IVSGG), Asp-170, Gly-183, Asp-187, and Asn-276 each bind substrate. Asp-304 is a binding site for Fe cation.

Belongs to the KAE1 / TsaD family. The cofactor is Fe(2+).

It localises to the cytoplasm. It carries out the reaction L-threonylcarbamoyladenylate + adenosine(37) in tRNA = N(6)-L-threonylcarbamoyladenosine(37) in tRNA + AMP + H(+). Required for the formation of a threonylcarbamoyl group on adenosine at position 37 (t(6)A37) in tRNAs that read codons beginning with adenine. Is involved in the transfer of the threonylcarbamoyl moiety of threonylcarbamoyl-AMP (TC-AMP) to the N6 group of A37, together with TsaE and TsaB. TsaD likely plays a direct catalytic role in this reaction. The polypeptide is tRNA N6-adenosine threonylcarbamoyltransferase (Staphylococcus aureus (strain bovine RF122 / ET3-1)).